Reading from the N-terminus, the 345-residue chain is Isocitrate lyase (345 aa).

A substrate-binding site is contributed by 58-60; it reads SGY. D98 is a binding site for Mg(2+). Residue C135 is the Proton acceptor of the active site. Substrate contacts are provided by residues 136-137, R170, 230-234, and T260; these read GH and NYSSS. The interval 318-345 is disordered; the sequence is DPEARRRIEESEGFSEEQADPITSNDDD. The span at 328 to 345 shows a compositional bias: acidic residues; sequence SEGFSEEQADPITSNDDD.

As to quaternary structure, homotetramer or homotrimer. Mg(2+) is required as a cofactor.

The enzyme catalyses D-threo-isocitrate = glyoxylate + succinate. Its pathway is carbohydrate metabolism; glyoxylate cycle; (S)-malate from isocitrate: step 1/2. In terms of biological role, involved in the metabolic adaptation in response to environmental changes. Catalyzes the reversible formation of succinate and glyoxylate from isocitrate, a key step of the glyoxylate cycle, which operates as an anaplerotic route for replenishing the tricarboxylic acid cycle during growth on fatty acid substrates. This is Isocitrate lyase (aceA) from Haloferax volcanii (strain ATCC 29605 / DSM 3757 / JCM 8879 / NBRC 14742 / NCIMB 2012 / VKM B-1768 / DS2) (Halobacterium volcanii).